A 116-amino-acid chain; its full sequence is Vesicle-associated membrane protein 5 (116 aa).

Topologically, residues 1–72 (MAGKELERCQ…RWENARCRIY (72 aa)) are cytoplasmic. One can recognise a v-SNARE coiled-coil homology domain in the interval 5–65 (ELERCQRQAD…KTLAQKKRWE (61 aa)). Phosphoserine occurs at positions 41, 48, and 49. Residues 73–93 (MGLAVGIALLILLIVLLVIFL) traverse the membrane as a helical; Anchor for type IV membrane protein segment. Topologically, residues 94–116 (PQSSKGSSAPQVQDAGPASGPGE) are vesicular. The tract at residues 97-116 (SKGSSAPQVQDAGPASGPGE) is disordered.

The protein belongs to the synaptobrevin family.

Its subcellular location is the cell membrane. It localises to the endomembrane system. The protein resides in the golgi apparatus. The protein localises to the trans-Golgi network membrane. Its function is as follows. May participate in trafficking events that are associated with myogenesis, such as myoblast fusion and/or GLUT4 trafficking. In Bos taurus (Bovine), this protein is Vesicle-associated membrane protein 5 (VAMP5).